A 123-amino-acid polypeptide reads, in one-letter code: uncharacterized protein (123 aa).

4 helical membrane passes run 9-31, 38-56, 67-91, and 98-114; these read LLLR…WISF, VLTL…VFAV, VIAV…AALY, and VSIV…IISA.

It to E.coli YhgE.

The protein localises to the cell membrane. This is an uncharacterized protein from Bacillus subtilis (strain 168).